A 353-amino-acid chain; its full sequence is Photosystem II D2 protein (353 aa).

The residue at position 2 (threonine 2) is an N-acetylthreonine. Threonine 2 is modified (phosphothreonine). A helical membrane pass occupies residues 41–61 (CAYFAVGGWFTGTTFVTSWYT). Histidine 118 is a chlorophyll a binding site. A helical membrane pass occupies residues 125-141 (GFMLRQFELARSVQLRP). Pheophytin a is bound by residues glutamine 130 and asparagine 143. A helical membrane pass occupies residues 153–166 (VFVSVFLIYPLGQS). Histidine 198 contributes to the chlorophyll a binding site. A helical membrane pass occupies residues 208–228 (AALLCAIHGATVENTLFEDGD). A plastoquinone is bound by residues histidine 215 and phenylalanine 262. A Fe cation-binding site is contributed by histidine 215. Fe cation is bound at residue histidine 269. The helical transmembrane segment at 279-295 (GLWMSALGVVGLALNLR) threads the bilayer.

This sequence belongs to the reaction center PufL/M/PsbA/D family. In terms of assembly, PSII is composed of 1 copy each of membrane proteins PsbA, PsbB, PsbC, PsbD, PsbE, PsbF, PsbH, PsbI, PsbJ, PsbK, PsbL, PsbM, PsbT, PsbX, PsbY, PsbZ, Psb30/Ycf12, at least 3 peripheral proteins of the oxygen-evolving complex and a large number of cofactors. It forms dimeric complexes. The D1/D2 heterodimer binds P680, chlorophylls that are the primary electron donor of PSII, and subsequent electron acceptors. It shares a non-heme iron and each subunit binds pheophytin, quinone, additional chlorophylls, carotenoids and lipids. There is also a Cl(-1) ion associated with D1 and D2, which is required for oxygen evolution. The PSII complex binds additional chlorophylls, carotenoids and specific lipids. serves as cofactor.

It is found in the plastid. It localises to the chloroplast thylakoid membrane. It catalyses the reaction 2 a plastoquinone + 4 hnu + 2 H2O = 2 a plastoquinol + O2. In terms of biological role, photosystem II (PSII) is a light-driven water:plastoquinone oxidoreductase that uses light energy to abstract electrons from H(2)O, generating O(2) and a proton gradient subsequently used for ATP formation. It consists of a core antenna complex that captures photons, and an electron transfer chain that converts photonic excitation into a charge separation. The D1/D2 (PsbA/PsbD) reaction center heterodimer binds P680, the primary electron donor of PSII as well as several subsequent electron acceptors. D2 is needed for assembly of a stable PSII complex. The chain is Photosystem II D2 protein from Cucumis sativus (Cucumber).